The primary structure comprises 244 residues: 15,16-dihydrobiliverdin:ferredoxin oxidoreductase (244 aa).

This sequence belongs to the HY2 family.

It carries out the reaction 15,16-dihydrobiliverdin + oxidized 2[4Fe-4S]-[ferredoxin] = biliverdin IXalpha + reduced 2[4Fe-4S]-[ferredoxin] + 2 H(+). In terms of biological role, catalyzes the two-electron reduction of biliverdin IX-alpha at the C15 methine bridge. This chain is 15,16-dihydrobiliverdin:ferredoxin oxidoreductase (pebA), found in Gloeobacter violaceus (strain ATCC 29082 / PCC 7421).